A 330-amino-acid polypeptide reads, in one-letter code: Aspartate--ammonia ligase (330 aa).

Belongs to the class-II aminoacyl-tRNA synthetase family. AsnA subfamily.

Its subcellular location is the cytoplasm. The catalysed reaction is L-aspartate + NH4(+) + ATP = L-asparagine + AMP + diphosphate + H(+). It participates in amino-acid biosynthesis; L-asparagine biosynthesis; L-asparagine from L-aspartate (ammonia route): step 1/1. The protein is Aspartate--ammonia ligase of Haemophilus influenzae (strain ATCC 51907 / DSM 11121 / KW20 / Rd).